Reading from the N-terminus, the 100-residue chain is MATIVDPRDIILAPVISEKSYALLDDNVYTFVVHPDSNKTQIKIAIEKIFAVKVASVNTANRQGKRKRTRTGYGKRKSTKRAIVTLAPGSKPIDLFGAPA.

Belongs to the universal ribosomal protein uL23 family. In terms of assembly, part of the 50S ribosomal subunit. Contacts protein L29, and trigger factor when it is bound to the ribosome.

Functionally, one of the early assembly proteins it binds 23S rRNA. One of the proteins that surrounds the polypeptide exit tunnel on the outside of the ribosome. Forms the main docking site for trigger factor binding to the ribosome. This chain is Large ribosomal subunit protein uL23, found in Mycobacterium marinum (strain ATCC BAA-535 / M).